A 596-amino-acid polypeptide reads, in one-letter code: CRISPR-associated DNA-binding protein Cas12m (596 aa).

The recognition domain (REC1-N) stretch occupies residues 19 to 53 (EVLRQQLWLAHNLREDLVSLQLAYDDDLKAIWSSY). The segment at 54-121 (PDVAQAEDTM…RDAIAVVKDD (68 aa)) is recognition domain (REC2). Coiled coils occupy residues 55-83 (DVAQAEDTMAAAEADAVALSERVKQARIE) and 91-117 (TELTQQLRDAKKRLKDARQARRDAIAV). The tract at residues 122–190 (AAERRKARSD…LRHHRFDGSG (69 aa)) is recognition domain (REC1-C). Residues 191 to 302 (TIAVQLQRQA…RAKLCVTARI (112 aa)) form a wedge domain (WED) region. Residues 303–313 (GDTEPVTSGPT) are linker. The tract at residues 314 to 541 (VALHLGWRST…RDGVPVTIVA (228 aa)) is ruvC-I. His-317 is a Mg(2+) binding site. The target nucleic-acid binding (TNB) stretch occupies residues 541–577 (AAADFTRTHSRCGHVNPADDRYLSNPVRCDGCGAMYD). Zn(2+) is bound by residues His-549, Cys-552, Cys-569, and Cys-572. Residues 578–596 (QDRSFVTLMLRAATAPSNP) form a ruvC-II region. Position 579 (Asp-579) interacts with Mg(2+).

It belongs to the CRISPR-associated DNA-binding protein Cas12m family. In terms of assembly, binds crRNA and target dsDNA as a monomer. Mg(2+) is required as a cofactor. The cofactor is Zn(2+).

In terms of biological role, CRISPR (clustered regularly interspaced short palindromic repeat), is an adaptive immune system that provides protection against mobile genetic elements (viruses, transposable elements and conjugative plasmids). CRISPR clusters contain sequences complementary to antecedent mobile elements and target invading nucleic acids. CRISPR clusters are transcribed and processed into CRISPR RNA (crRNA). Recognizes a short motif in the CRISPR repeat sequences (the 5' PAM or protospacer adjacent motif, 5'-TTN-3' in this organism) to help distinguish self versus nonself, as targets within the bacterial CRISPR locus do not have PAMs. Upon expression in E.coli as a CRISPR locus inhibits plasmid propagation when targeted to regions essential for plasmid propagation (replication origin and dnaA). The crRNA-Cas12m complex inhibits transcription from target DNA leading to gene silencing. Cas12m-crRNA binds DNA in a PAM-dependent, crRNA-guided fashion. Binds a 17-bp crRNA-ss-target DNA heteroduplex, in a 56 nucleotide crRNA. No dsDNA, ssDNA or RNA nuclease activity is seen for the crRNA-Cas12m complex. Is required to process pre-crRNA to mature crRNA without a tracrRNA. Upon expression in E.coli as a CRISPR region preferentially binds to its associated crRNA. The polypeptide is CRISPR-associated DNA-binding protein Cas12m (Mycolicibacterium mucogenicum (Mycobacterium mucogenicum)).